Here is a 219-residue protein sequence, read N- to C-terminus: Large ribosomal subunit protein uL3 (219 aa).

The disordered stretch occupies residues 133 to 153; the sequence is GRASHGNSRSHNVPGSIGMAQ. Q153 is modified (N5-methylglutamine).

This sequence belongs to the universal ribosomal protein uL3 family. Part of the 50S ribosomal subunit. Forms a cluster with proteins L14 and L19. Post-translationally, methylated by PrmB.

Functionally, one of the primary rRNA binding proteins, it binds directly near the 3'-end of the 23S rRNA, where it nucleates assembly of the 50S subunit. The chain is Large ribosomal subunit protein uL3 from Burkholderia thailandensis (strain ATCC 700388 / DSM 13276 / CCUG 48851 / CIP 106301 / E264).